The chain runs to 374 residues: tRNA-specific 2-thiouridylase MnmA (374 aa).

Residues 17–24 and Met43 each bind ATP; that span reads GMSGGVDS. Positions 103-105 are interaction with target base in tRNA; sequence NPD. The Nucleophile role is filled by Cys108. Residues Cys108 and Cys204 are joined by a disulfide bond. Gly132 contacts ATP. The interaction with tRNA stretch occupies residues 154–156; it reads KDQ. Residue Cys204 is the Cysteine persulfide intermediate of the active site. Residues 316–317 are interaction with tRNA; the sequence is RY.

The protein belongs to the MnmA/TRMU family.

It is found in the cytoplasm. The catalysed reaction is S-sulfanyl-L-cysteinyl-[protein] + uridine(34) in tRNA + AH2 + ATP = 2-thiouridine(34) in tRNA + L-cysteinyl-[protein] + A + AMP + diphosphate + H(+). Functionally, catalyzes the 2-thiolation of uridine at the wobble position (U34) of tRNA, leading to the formation of s(2)U34. The polypeptide is tRNA-specific 2-thiouridylase MnmA (Pseudomonas fluorescens (strain SBW25)).